Consider the following 597-residue polypeptide: Miltiradiene synthase KSL2, chloroplastic (597 aa).

Residues 1 to 51 (MSLAFNLRAIPFSGHTIQSRRGLFPVHESPMITTKPFVAVKCSLTTSTDLM) constitute a chloroplast transit peptide. Residues Asp329, Asp333, Asn473, and Glu481 each contribute to the Mg(2+) site. A DDXXD motif motif is present at residues 329–333 (DDFFD).

Belongs to the terpene synthase family. Mg(2+) is required as a cofactor.

Its subcellular location is the plastid. The protein resides in the chloroplast. It carries out the reaction (+)-copalyl diphosphate = miltiradiene + diphosphate. Its pathway is secondary metabolite biosynthesis; terpenoid biosynthesis. Functionally, involved in the biosynthesis of ent-kaurene diterpenoids natural products such as oridonin, miltiradiene, eriocalyxin B and nezukol, known to exhibit antitumor, anti-inflammatory and antibacterial activities. Catalyzes the conversion of (+)-copalyl diphosphate ((+)-CPP) to miltiradiene. This Isodon japonicus (Scutellaria japonica) protein is Miltiradiene synthase KSL2, chloroplastic.